A 632-amino-acid polypeptide reads, in one-letter code: Sodium- and chloride-dependent GABA transporter 3 (632 aa).

The tract at residues 1 to 41 is disordered; sequence MTAEKALPLGNGKAAEEARESEAPGGGCSSGGAAPARHPRV. Topologically, residues 1–58 are cytoplasmic; that stretch reads MTAEKALPLGNGKAAEEARESEAPGGGCSSGGAAPARHPRVKRDKAVHERGHWNNKVE. Position 21 is a phosphoserine (serine 21). Transmembrane regions (helical) follow at residues 59-79, 87-106, and 131-151; these read FVLS…FPYL, AFLI…VFFL, and GIGY…IIIL. Over 152-225 the chain is Extracellular; that stretch reads AWAIFYLSNC…DGIEHIGNLR (74 aa). 3 N-linked (GlcNAc...) asparagine glycosylation sites follow: asparagine 187, asparagine 190, and asparagine 198. The next 9 helical transmembrane spans lie at 226 to 244, 253 to 270, 306 to 323, 335 to 356, 389 to 408, 438 to 456, 473 to 493, 514 to 533, and 553 to 571; these read WELA…FCIW, VVYV…ILLI, IFFS…LGSY, IMLC…FSVL, MPLS…FLGL, LLIL…VMLT, GMCL…VYGS, WCWM…FFLI, and IGWL…WICI. Over 572 to 632 the chain is Cytoplasmic; it reads TVWKTEGTLP…AAITEKETHF (61 aa).

This sequence belongs to the sodium:neurotransmitter symporter (SNF) (TC 2.A.22) family. SLC6A11 subfamily. Widespread distribution in the brain.

Its subcellular location is the cell membrane. The enzyme catalyses 4-aminobutanoate(out) + chloride(out) + 2 Na(+)(out) = 4-aminobutanoate(in) + chloride(in) + 2 Na(+)(in). It catalyses the reaction taurine(out) + chloride(out) + 2 Na(+)(out) = taurine(in) + chloride(in) + 2 Na(+)(in). The catalysed reaction is beta-alanine(out) + chloride(out) + 2 Na(+)(out) = beta-alanine(in) + chloride(in) + 2 Na(+)(in). It carries out the reaction hypotaurine(out) + chloride(out) + 2 Na(+)(out) = hypotaurine(in) + chloride(in) + 2 Na(+)(in). Its activity is regulated as follows. GABA transport is inhibited by SNAP-5114. Its function is as follows. Mediates sodium- and chloride-dependent transport of gamma-aminobutyric acid (GABA). Can also mediate transport of beta-alanine and to a lower extent that of taurine and hypotaurine. The chain is Sodium- and chloride-dependent GABA transporter 3 (SLC6A11) from Homo sapiens (Human).